Here is a 272-residue protein sequence, read N- to C-terminus: Centromere protein V-like protein 1 (272 aa).

Basic residues predominate over residues 1-17 (MGRVRNRATAQRRRRKR). Disordered stretches follow at residues 1–23 (MGRV…DPPA) and 65–95 (RRVR…KDLD). Residues 79-90 (APTPDPPGPAPS) show a composition bias toward pro residues. Residues 133-246 (HTGGCHCGAV…EEVGGGDPGE (114 aa)) form the CENP-V/GFA domain. The Zn(2+) site is built by C137, C139, C157, C159, C162, C201, and C204. Positions 240–272 (GGGDPGEEAAEEHKAIHKTSSQSAPACPREQEQ) are disordered.

It belongs to the Gfa family. The cofactor is Zn(2+).

The sequence is that of Centromere protein V-like protein 1 from Homo sapiens (Human).